The sequence spans 173 residues: Microfibrillar-associated protein 5 (173 aa).

Positions 1-21 (MSLLGPKVLLFLAAFIITSDW) are cleaved as a signal peptide. Positions 30 to 32 (RGD) match the Cell attachment site motif. Residue T54 is glycosylated (O-linked (GalNAc...) threonine). N-linked (GlcNAc...) asparagine glycosylation is present at N79.

It belongs to the MFAP family. As to quaternary structure, interacts with TGFB2. Interacts with BMP2. Interacts with FBN1 (via N-terminal domain) and FBN2. Forms intermolecular disulfide bonds either with other MAGP-2 molecules or with other components of the microfibrils. Post-translationally, N- and O-glycosylated. O-glycosylated with core 1 or possibly core 8 glycans. O-glycan heterogeneity at Thr-54: HexHexNAc (major) and HexHexNAc + sulfate (minor).

The protein localises to the secreted. It localises to the extracellular space. The protein resides in the extracellular matrix. In terms of biological role, may play a role in hematopoiesis. In the cardiovascular system, could regulate growth factors or participate in cell signaling in maintaining large vessel integrity. Component of the elastin-associated microfibrils. The chain is Microfibrillar-associated protein 5 (MFAP5) from Homo sapiens (Human).